A 159-amino-acid polypeptide reads, in one-letter code: Allergen Arg r 1 (159 aa).

Residues 1–16 (MALIILLVACLSVVSA) form the signal peptide. Disulfide bonds link C50–C155 and C109–C134.

The protein belongs to the calycin superfamily. Histamine-binding salivary protein family. Not glycosylated.

The protein resides in the secreted. The protein is Allergen Arg r 1 of Argas reflexus (European pigeon tick).